The sequence spans 155 residues: MKTYSAKPSEIEKKWWVIDAKNIVLGRLASRVANMLRGKHKPSFTPHLDCGDNIIIINAEHVKLTGKKANPRDGKIYYRYTGFPGGIKDTTAGKILSGKHPERVIKMAVKRMITRNALGAKQMSNLYVYANSDHPHMAQQPTVYDFAGQNPKNKK.

The protein belongs to the universal ribosomal protein uL13 family. As to quaternary structure, part of the 50S ribosomal subunit.

Functionally, this protein is one of the early assembly proteins of the 50S ribosomal subunit, although it is not seen to bind rRNA by itself. It is important during the early stages of 50S assembly. The sequence is that of Large ribosomal subunit protein uL13 from Rickettsia akari (strain Hartford).